Reading from the N-terminus, the 316-residue chain is DDRGK domain-containing protein 1 (316 aa).

The Lumenal segment spans residues 1-3 (MVE). The helical transmembrane segment at 4–24 (LDYLFLGSVGFLTIALMLIIL) threads the bilayer. Topologically, residues 25-316 (RIIKLYFDEK…VEHVSELTAA (292 aa)) are cytoplasmic. The tract at residues 147-187 (LEQEKEKRLQKEREKQMEQEEEERKRKCREREEREKREEEE) is disordered.

The protein belongs to the DDRGK1 family.

The protein localises to the endoplasmic reticulum membrane. Functionally, substrate adapter for ufmylation, the covalent attachment of the ubiquitin-like modifier UFM1 to substrate proteins. This Brugia malayi (Filarial nematode worm) protein is DDRGK domain-containing protein 1.